The primary structure comprises 269 residues: MPDTASDDALVLYGQRFASRLLLGTARYPSPSVLEAAVRRARPAMVTASLRRQGSNPAEAGSGFWELLRRLDVPVLPNTAGCHSIQEAVTTAQMAREVFGTPWIKLELIGDDYTLQPDTLNLVEAASQLVRDGFHVLPYCTEDLVLCQRLVDVGCQAVMPWAAPIGTGRGPVNPYALRTLRERLDVPLLVDAGLGLPSHACQVMEWGYDGVLLNTAVALAQDPVAMAGAFADAVQAGRTARQAGAMSAQDAAQPSTPVLGTPFWHHDHG.

K105 (schiff-base intermediate with DXP) is an active-site residue. 1-deoxy-D-xylulose 5-phosphate is bound by residues G166, 192-193, and 214-215; these read AG and NT. Residues 245-269 form a disordered region; the sequence is AMSAQDAAQPSTPVLGTPFWHHDHG.

The protein belongs to the ThiG family. In terms of assembly, homotetramer. Forms heterodimers with either ThiH or ThiS.

Its subcellular location is the cytoplasm. The enzyme catalyses [ThiS sulfur-carrier protein]-C-terminal-Gly-aminoethanethioate + 2-iminoacetate + 1-deoxy-D-xylulose 5-phosphate = [ThiS sulfur-carrier protein]-C-terminal Gly-Gly + 2-[(2R,5Z)-2-carboxy-4-methylthiazol-5(2H)-ylidene]ethyl phosphate + 2 H2O + H(+). It functions in the pathway cofactor biosynthesis; thiamine diphosphate biosynthesis. Its function is as follows. Catalyzes the rearrangement of 1-deoxy-D-xylulose 5-phosphate (DXP) to produce the thiazole phosphate moiety of thiamine. Sulfur is provided by the thiocarboxylate moiety of the carrier protein ThiS. In vitro, sulfur can be provided by H(2)S. The polypeptide is Thiazole synthase (Paracidovorax citrulli (strain AAC00-1) (Acidovorax citrulli)).